Reading from the N-terminus, the 276-residue chain is NADPH-dependent 7-cyano-7-deazaguanine reductase (276 aa).

83-85 (IES) provides a ligand contact to substrate. 85–86 (SK) serves as a coordination point for NADPH. C184 (thioimide intermediate) is an active-site residue. The active-site Proton donor is the D191. 223 to 224 (HE) contacts substrate. 252-253 (RG) is a binding site for NADPH.

The protein belongs to the GTP cyclohydrolase I family. QueF type 2 subfamily. As to quaternary structure, homodimer.

The protein resides in the cytoplasm. It catalyses the reaction 7-aminomethyl-7-carbaguanine + 2 NADP(+) = 7-cyano-7-deazaguanine + 2 NADPH + 3 H(+). Its pathway is tRNA modification; tRNA-queuosine biosynthesis. Catalyzes the NADPH-dependent reduction of 7-cyano-7-deazaguanine (preQ0) to 7-aminomethyl-7-deazaguanine (preQ1). The polypeptide is NADPH-dependent 7-cyano-7-deazaguanine reductase (Pseudomonas putida (strain W619)).